A 139-amino-acid chain; its full sequence is Trafficking protein particle complex subunit 2-like protein (139 aa).

The protein belongs to the TRAPP small subunits family. Sedlin subfamily.

The protein localises to the cytoplasm. Its subcellular location is the perinuclear region. The protein resides in the endoplasmic reticulum. It is found in the golgi apparatus. In terms of biological role, may play a role in vesicular transport from endoplasmic reticulum to Golgi. The sequence is that of Trafficking protein particle complex subunit 2-like protein (TRAPPC2L) from Taeniopygia guttata (Zebra finch).